A 192-amino-acid polypeptide reads, in one-letter code: MKAVKIVEGRAYPLGESNIDTDIIIPAHYLKTTDRKGLAKGAFETIRAKEGNVFDNPEYKGAPILIAGDNFGCGSSREHAAWAIKEMGVEAVIAPRFSDIFSGNAFKNGLLTVVLPEADVERLLEVAKTDPITLDLENQVVTTPFQDRFHFDIDPFRKRCLLEGLDEIGLTLKDQDKISQYEDVLASDRPWV.

It belongs to the LeuD family. LeuD type 1 subfamily. In terms of assembly, heterodimer of LeuC and LeuD.

The enzyme catalyses (2R,3S)-3-isopropylmalate = (2S)-2-isopropylmalate. It functions in the pathway amino-acid biosynthesis; L-leucine biosynthesis; L-leucine from 3-methyl-2-oxobutanoate: step 2/4. Catalyzes the isomerization between 2-isopropylmalate and 3-isopropylmalate, via the formation of 2-isopropylmaleate. The sequence is that of 3-isopropylmalate dehydratase small subunit from Zymomonas mobilis subsp. mobilis (strain ATCC 31821 / ZM4 / CP4).